Here is a 373-residue protein sequence, read N- to C-terminus: Queuine tRNA-ribosyltransferase (373 aa).

Asp94 functions as the Proton acceptor in the catalytic mechanism. Residues 94-98 (DSGGF), Asp148, Gln190, and Gly217 contribute to the substrate site. The segment at 248 to 254 (GVGSPDC) is RNA binding. Catalysis depends on Asp267, which acts as the Nucleophile. The interval 272-276 (TRIAR) is RNA binding; important for wobble base 34 recognition. Zn(2+) contacts are provided by Cys305, Cys307, Cys310, and His336.

This sequence belongs to the queuine tRNA-ribosyltransferase family. As to quaternary structure, homodimer. Within each dimer, one monomer is responsible for RNA recognition and catalysis, while the other monomer binds to the replacement base PreQ1. The cofactor is Zn(2+).

It catalyses the reaction 7-aminomethyl-7-carbaguanine + guanosine(34) in tRNA = 7-aminomethyl-7-carbaguanosine(34) in tRNA + guanine. It functions in the pathway tRNA modification; tRNA-queuosine biosynthesis. Its function is as follows. Catalyzes the base-exchange of a guanine (G) residue with the queuine precursor 7-aminomethyl-7-deazaguanine (PreQ1) at position 34 (anticodon wobble position) in tRNAs with GU(N) anticodons (tRNA-Asp, -Asn, -His and -Tyr). Catalysis occurs through a double-displacement mechanism. The nucleophile active site attacks the C1' of nucleotide 34 to detach the guanine base from the RNA, forming a covalent enzyme-RNA intermediate. The proton acceptor active site deprotonates the incoming PreQ1, allowing a nucleophilic attack on the C1' of the ribose to form the product. After dissociation, two additional enzymatic reactions on the tRNA convert PreQ1 to queuine (Q), resulting in the hypermodified nucleoside queuosine (7-(((4,5-cis-dihydroxy-2-cyclopenten-1-yl)amino)methyl)-7-deazaguanosine). The chain is Queuine tRNA-ribosyltransferase from Moorella thermoacetica (strain ATCC 39073 / JCM 9320).